Reading from the N-terminus, the 357-residue chain is MATPAVPVSAPPATPTPVPAAAPASVPAPTPAPAAAPVPAAAPASSSDPAAAAAATAAPGQTPASAQAPAQTPAPALPGPALPGPFPGGRVVRLHPVILASIVDSYERRNEGAARVIGTLLGTVDKHSVEVTNCFSVPHNESEDEVAVDMEFAKNMYELHKKVSPNELILGWYATGHDITEHSVLIHEYYSREAPNPIHLTVDTSLQNGRMSIKAYVSTLMGVPGRTMGVMFTPLTVKYAYYDTERIGVDLIMKTCFSPNRVIGLSSDLQQVGGASARIQDALSTVLQYAEDVLSGKVSADNTVGRFLMSLVNQVPKIVPDDFETMLNSNINDLLMVTYLANLTQSQIALNEKLVNL.

Positions 1 to 82 are disordered; that stretch reads MATPAVPVSA…PAPALPGPAL (82 aa). Residue Ala2 is modified to N-acetylalanine. Positions 9–36 are enriched in pro residues; that stretch reads SAPPATPTPVPAAAPASVPAPTPAPAAA. The span at 37-74 shows a compositional bias: low complexity; the sequence is PVPAAAPASSSDPAAAAAATAAPGQTPASAQAPAQTPA. Position 46 is a phosphoserine; by CDK11; in vitro (Ser46). The MPN domain occupies 92–222; that stretch reads VRLHPVILAS…IKAYVSTLMG (131 aa). Lys238 is modified (N6-acetyllysine). Residue Ser258 is modified to Phosphoserine.

This sequence belongs to the eIF-3 subunit F family. Component of the eukaryotic translation initiation factor 3 (eIF-3) complex, which is composed of 13 subunits: EIF3A, EIF3B, EIF3C, EIF3D, EIF3E, EIF3F, EIF3G, EIF3H, EIF3I, EIF3J, EIF3K, EIF3L and EIF3M. The eIF-3 complex appears to include 3 stable modules: module A is composed of EIF3A, EIF3B, EIF3G and EIF3I; module B is composed of EIF3F, EIF3H, and EIF3M; and module C is composed of EIF3C, EIF3D, EIF3E, EIF3K and EIF3L. EIF3C of module C binds EIF3B of module A and EIF3H of module B, thereby linking the three modules. EIF3J is a labile subunit that binds to the eIF-3 complex via EIF3B. The eIF-3 complex interacts with RPS6KB1 under conditions of nutrient depletion. Mitogenic stimulation leads to binding and activation of a complex composed of MTOR and RPTOR, leading to phosphorylation and release of RPS6KB1 and binding of EIF4B to eIF-3. Interacts with RNF139; the interaction leads to protein translation inhibitions in a ubiquitination-dependent manner. Interacts with DTX1, the interaction is required for deubiquitinating activity towards NOTCH1. Phosphorylation is enhanced upon serum stimulation. Phosphorylated during apoptosis by caspase-processed CDK11.

It is found in the cytoplasm. It carries out the reaction Thiol-dependent hydrolysis of ester, thioester, amide, peptide and isopeptide bonds formed by the C-terminal Gly of ubiquitin (a 76-residue protein attached to proteins as an intracellular targeting signal).. In terms of biological role, component of the eukaryotic translation initiation factor 3 (eIF-3) complex, which is required for several steps in the initiation of protein synthesis. The eIF-3 complex associates with the 40S ribosome and facilitates the recruitment of eIF-1, eIF-1A, eIF-2:GTP:methionyl-tRNAi and eIF-5 to form the 43S pre-initiation complex (43S PIC). The eIF-3 complex stimulates mRNA recruitment to the 43S PIC and scanning of the mRNA for AUG recognition. The eIF-3 complex is also required for disassembly and recycling of post-termination ribosomal complexes and subsequently prevents premature joining of the 40S and 60S ribosomal subunits prior to initiation. The eIF-3 complex specifically targets and initiates translation of a subset of mRNAs involved in cell proliferation, including cell cycling, differentiation and apoptosis, and uses different modes of RNA stem-loop binding to exert either translational activation or repression. Functionally, deubiquitinates activated NOTCH1, promoting its nuclear import, thereby acting as a positive regulator of Notch signaling. The polypeptide is Eukaryotic translation initiation factor 3 subunit F (Homo sapiens (Human)).